The following is a 218-amino-acid chain: Capsid protein (218 aa).

M1 carries the N-acetylmethionine; by host modification. A disordered region spans residues 1–30; it reads MDKSESTSAGRNRRRRPRRGSRSAPSSSDA. Positions 11-21 are enriched in basic residues; it reads RNRRRRPRRGS.

It belongs to the cucumovirus capsid protein family.

It localises to the virion. Its function is as follows. Capsid protein. Probably binds RNA and plays a role in packaging. In Cucumis sativus (Cucumber), this protein is Capsid protein.